Reading from the N-terminus, the 215-residue chain is MOB kinase activator-like 1B (215 aa).

A disordered region spans residues 1 to 29 (MSLFGLGSRNQKTFRPKKSAPTGSKGAQL). Zn(2+) contacts are provided by cysteine 80, cysteine 85, histidine 162, and histidine 167.

It belongs to the MOB1/phocein family. As to expression, constitutively expressed with higher expression in roots, flowers and pods than in leaves and stems.

The protein resides in the cytoplasm. Its subcellular location is the cytoskeleton. It localises to the phragmoplast. This Medicago sativa subsp. falcata (Sickle medic) protein is MOB kinase activator-like 1B.